Reading from the N-terminus, the 505-residue chain is Betaine aldehyde dehydrogenase (505 aa).

239 to 244 is a binding site for NAD(+); it reads GSTATG. Glutamate 261 (proton acceptor) is an active-site residue. The active-site Nucleophile is cysteine 296. The Microbody targeting signal motif lies at 503–505; that stretch reads SKL.

It belongs to the aldehyde dehydrogenase family. As to quaternary structure, homodimer.

The protein localises to the peroxisome. The catalysed reaction is betaine aldehyde + NAD(+) + H2O = glycine betaine + NADH + 2 H(+). It participates in amine and polyamine biosynthesis; betaine biosynthesis via choline pathway; betaine from betaine aldehyde: step 1/1. The chain is Betaine aldehyde dehydrogenase from Hordeum vulgare (Barley).